Here is a 351-residue protein sequence, read N- to C-terminus: uncharacterized protein (351 aa).

Mn(2+)-binding residues include Asp215, Asp226, His290, Glu319, and Glu333.

The protein belongs to the peptidase M24B family. The cofactor is Mn(2+).

This is an uncharacterized protein from Staphylococcus aureus (strain USA300).